The sequence spans 611 residues: Acetylcholinesterase (611 aa).

The first 31 residues, 1–31 (MRPPWCPLYTPSLAAPILLLLLFLLGGGAEA), serve as a signal peptide directing secretion. Cys-97 and Cys-124 are joined by a disulfide. Residue Ser-231 is the Acyl-ester intermediate of the active site. A disulfide bond links Cys-285 and Cys-300. Asn-293 carries N-linked (GlcNAc...) asparagine glycosylation. Glu-362 functions as the Charge relay system in the catalytic mechanism. N-linked (GlcNAc...) asparagine glycosylation occurs at Asn-378. Residues Cys-437 and Cys-557 are joined by a disulfide bond. Residue His-475 is the Charge relay system of the active site. Asn-492 carries an N-linked (GlcNAc...) asparagine glycan.

This sequence belongs to the type-B carboxylesterase/lipase family. In terms of assembly, interacts with PRIMA1. The interaction with PRIMA1 is required to anchor it to the basal lamina of cells and organize into tetramers. Isoform H generates GPI-anchored dimers; disulfide linked. Isoform T generates multiple structures, ranging from monomers and dimers to collagen-tailed and hydrophobic-tailed forms, in which catalytic tetramers are associated with anchoring proteins that attach them to the basal lamina or to cell membranes. In the collagen-tailed forms, isoform T subunits are associated with a specific collagen, COLQ, which triggers the formation of isoform T tetramers, from monomers and dimers.

The protein resides in the synapse. It is found in the secreted. It localises to the cell membrane. The enzyme catalyses acetylcholine + H2O = choline + acetate + H(+). Its function is as follows. Terminates signal transduction at the neuromuscular junction by rapid hydrolysis of the acetylcholine released into the synaptic cleft. This chain is Acetylcholinesterase (ACHE), found in Felis catus (Cat).